Consider the following 284-residue polypeptide: Tropomyosin (284 aa).

The stretch at 1–284 (MDGIKKKMIA…DQTFAELTGY (284 aa)) forms a coiled coil. Composition is skewed to basic and acidic residues over residues 29–42 (LKQKEEEQEKKETE) and 111–136 (AKFDEASKTAEESERGRKELEIRSIA). Disordered stretches follow at residues 29-49 (LKQKEEEQEKKETEIGELNNR) and 111-149 (AKFDEASKTAEESERGRKELEIRSIADDEGLSQLEDQQK).

This sequence belongs to the tropomyosin family.

Tropomyosin, in association with the troponin complex, plays a central role in the calcium dependent regulation of muscle contraction. The chain is Tropomyosin from Clonorchis sinensis (Chinese liver fluke).